Consider the following 523-residue polypeptide: Mediator of RNA polymerase II transcription subunit 1.2 (523 aa).

This sequence belongs to the Mediator complex subunit 1 family. As to quaternary structure, component of the Mediator complex.

The protein resides in the nucleus. Its function is as follows. Component of the Mediator complex, a coactivator involved in the regulated transcription of nearly all RNA polymerase II-dependent genes. Mediator functions as a bridge to convey information from gene-specific regulatory proteins to the basal RNA polymerase II transcription machinery. Mediator is recruited to promoters by direct interactions with regulatory proteins and serves as a scaffold for the assembly of a functional preinitiation complex with RNA polymerase II and the general transcription factors. This Caenorhabditis briggsae protein is Mediator of RNA polymerase II transcription subunit 1.2 (mdt-1.2).